The primary structure comprises 86 residues: Large ribosomal subunit protein bL31B (86 aa).

Belongs to the bacterial ribosomal protein bL31 family. Type B subfamily. In terms of assembly, part of the 50S ribosomal subunit.

This Burkholderia lata (strain ATCC 17760 / DSM 23089 / LMG 22485 / NCIMB 9086 / R18194 / 383) protein is Large ribosomal subunit protein bL31B.